Consider the following 394-residue polypeptide: ATP phosphoribosyltransferase regulatory subunit (394 aa).

Belongs to the class-II aminoacyl-tRNA synthetase family. HisZ subfamily. As to quaternary structure, heteromultimer composed of HisG and HisZ subunits.

It localises to the cytoplasm. It functions in the pathway amino-acid biosynthesis; L-histidine biosynthesis; L-histidine from 5-phospho-alpha-D-ribose 1-diphosphate: step 1/9. In terms of biological role, required for the first step of histidine biosynthesis. May allow the feedback regulation of ATP phosphoribosyltransferase activity by histidine. This chain is ATP phosphoribosyltransferase regulatory subunit, found in Teredinibacter turnerae (strain ATCC 39867 / T7901).